Here is a 702-residue protein sequence, read N- to C-terminus: Ribosomal RNA large subunit methyltransferase K/L (702 aa).

The THUMP domain maps to Leu43–Leu154.

It belongs to the methyltransferase superfamily. RlmKL family.

It localises to the cytoplasm. The enzyme catalyses guanosine(2445) in 23S rRNA + S-adenosyl-L-methionine = N(2)-methylguanosine(2445) in 23S rRNA + S-adenosyl-L-homocysteine + H(+). It carries out the reaction guanosine(2069) in 23S rRNA + S-adenosyl-L-methionine = N(2)-methylguanosine(2069) in 23S rRNA + S-adenosyl-L-homocysteine + H(+). In terms of biological role, specifically methylates the guanine in position 2445 (m2G2445) and the guanine in position 2069 (m7G2069) of 23S rRNA. The chain is Ribosomal RNA large subunit methyltransferase K/L from Escherichia coli (strain K12 / DH10B).